The chain runs to 309 residues: Protein FdhE (309 aa).

Belongs to the FdhE family.

It localises to the cytoplasm. In terms of biological role, necessary for formate dehydrogenase activity. The protein is Protein FdhE of Salmonella enteritidis PT4 (strain P125109).